A 215-amino-acid polypeptide reads, in one-letter code: Nucleoside triphosphate pyrophosphatase (215 aa).

D80 serves as the catalytic Proton acceptor.

It belongs to the Maf family. A divalent metal cation serves as cofactor.

Its subcellular location is the cytoplasm. It carries out the reaction a ribonucleoside 5'-triphosphate + H2O = a ribonucleoside 5'-phosphate + diphosphate + H(+). It catalyses the reaction a 2'-deoxyribonucleoside 5'-triphosphate + H2O = a 2'-deoxyribonucleoside 5'-phosphate + diphosphate + H(+). Its function is as follows. Nucleoside triphosphate pyrophosphatase. May have a dual role in cell division arrest and in preventing the incorporation of modified nucleotides into cellular nucleic acids. In Leifsonia xyli subsp. xyli (strain CTCB07), this protein is Nucleoside triphosphate pyrophosphatase.